A 234-amino-acid chain; its full sequence is Transcription factor UDT1 (234 aa).

The segment at 1-51 is disordered; that stretch reads MPRRARARGGGGGGGEEVKVEDDFIDSVLNFGGGGGGEEDGDDGEEEQQQQ. Residues 37–48 are compositionally biased toward acidic residues; that stretch reads GEEDGDDGEEEQ. The segment at 61 to 74 is basic motif; degenerate; sequence EFKSKNLEAERRRR. A bHLH domain is found at 61 to 110; it reads EFKSKNLEAERRRRGRLNGNIFALRAVVPKITKMSKEATLSDAIEHIKNL. Residues 75–110 are helix-loop-helix motif; that stretch reads GRLNGNIFALRAVVPKITKMSKEATLSDAIEHIKNL.

Belongs to the bHLH protein family.

The protein resides in the nucleus. Its function is as follows. Transcription factor that plays a crucial role in tapetum development. Required for male fertility and pollen differentiation within the developing anther. Plays a major role in maintaining tapetum development, starting in early meiosis. Required for pollen mother cell meiosis. May regulate the anther-specific cysteine protease CP1 and lipid-transfer proteins C4 and C6. Required for anther development. Functions in parallel with GAMYB to regulate early anther development. Functions upstream of the transcription factor TDR and may positively regulate its transcription. The polypeptide is Transcription factor UDT1 (Oryza sativa subsp. japonica (Rice)).